The chain runs to 372 residues: L-selectin (372 aa).

The N-terminal stretch at 1 to 28 (MVFPWRCEGTYWGSRNILKLWVWTLLCC) is a signal peptide. Positions 29–38 (DFLIHHGTHC) are excised as a propeptide. Residues 39–332 (WTYHYSEKPM…FSKIKEGDYN (294 aa)) are Extracellular-facing. The C-type lectin domain occupies 55 to 155 (KFCKQNYTDL…ACHKRKAALC (101 aa)). Disulfide bonds link Cys57-Cys155, Cys128-Cys147, Cys128-Cys160, Cys160-Cys171, Cys165-Cys180, Cys182-Cys191, Cys197-Cys241, Cys227-Cys254, Cys259-Cys303, and Cys289-Cys316. Residues Asn60 and Asn104 are each glycosylated (N-linked (GlcNAc...) asparagine). Residues Glu118, Asn120, Glu126, Asn143, and Asp144 each coordinate Ca(2+). The EGF-like domain occupies 156 to 192 (YTASCQPGSCNGRGECVETINNHTCICDAGYYGPQCQ). Asn177 carries N-linked (GlcNAc...) asparagine glycosylation. 2 Sushi domains span residues 195 to 256 (VQCE…ICQV) and 257 to 318 (VQCE…ICQE). N-linked (GlcNAc...) asparagine glycosylation is found at Asn216, Asn226, Asn246, Asn278, Asn288, Asn308, and Asn320. Residues 333-355 (PLFIPVAVMVTAFSGLAFLIWLA) form a helical membrane-spanning segment. At 356–372 (RRLKKGKKSQERMDDPY) the chain is on the cytoplasmic side.

The protein belongs to the selectin/LECAM family. Interaction with SELPLG/PSGL1 and PODXL2 is required for promoting recruitment and rolling of leukocytes. This interaction is dependent on the sialyl Lewis X glycan modification of SELPLG and PODXL2, and tyrosine sulfation modifications of SELPLG. Sulfation on 'Tyr-51' of SELPLG is important for L-selectin binding. N-glycosylated. In terms of tissue distribution, predominantly expressed in lymphoid tissue.

Its subcellular location is the cell membrane. Calcium-dependent lectin that mediates cell adhesion by binding to glycoproteins on neighboring cells. Mediates the adherence of lymphocytes to endothelial cells of high endothelial venules in peripheral lymph nodes. Promotes initial tethering and rolling of leukocytes in endothelia. The protein is L-selectin (Sell) of Mus musculus (Mouse).